A 447-amino-acid chain; its full sequence is Kynurenine 3-monooxygenase (447 aa).

It belongs to the aromatic-ring hydroxylase family. KMO subfamily. The cofactor is FAD.

The catalysed reaction is L-kynurenine + NADPH + O2 + H(+) = 3-hydroxy-L-kynurenine + NADP(+) + H2O. Its pathway is cofactor biosynthesis; NAD(+) biosynthesis; quinolinate from L-kynurenine: step 1/3. Its function is as follows. Catalyzes the hydroxylation of L-kynurenine (L-Kyn) to form 3-hydroxy-L-kynurenine (L-3OHKyn). Required for synthesis of quinolinic acid. The polypeptide is Kynurenine 3-monooxygenase (Christiangramia forsetii (strain DSM 17595 / CGMCC 1.15422 / KT0803) (Gramella forsetii)).